A 350-amino-acid chain; its full sequence is Fe-S cluster assembly protein dre2 (350 aa).

The interval 23–156 (TSFNLRTLLL…KPDHSASVAV (134 aa)) is N-terminal SAM-like domain. Residues 157-242 (PLRLRRKDNS…EDTLLTEEDM (86 aa)) are linker. The tract at residues 165–209 (NSKTTAVSNAGPPVSTVEVPVSGKRKSVDMTEDVPEKDVPKNDVP) is disordered. The segment covering 190–208 (KSVDMTEDVPEKDVPKNDV) has biased composition (basic and acidic residues). Positions 252, 263, 266, and 268 each coordinate [2Fe-2S] cluster. The tract at residues 252–268 (CAPRAGKRRRACKDCTC) is fe-S binding site A. Cys313, Cys316, Cys324, and Cys327 together coordinate [4Fe-4S] cluster. 2 consecutive short sequence motifs (cx2C motif) follow at residues 313–316 (CGNC) and 324–327 (CDGC). The segment at 313-327 (CGNCSLGDAFRCDGC) is fe-S binding site B.

Belongs to the anamorsin family. In terms of assembly, monomer. Interacts with TAH18. Interacts with MIA40. The cofactor is [2Fe-2S] cluster. Requires [4Fe-4S] cluster as cofactor.

The protein resides in the cytoplasm. Its subcellular location is the mitochondrion intermembrane space. Its function is as follows. Component of the cytosolic iron-sulfur (Fe-S) protein assembly (CIA) machinery required for the maturation of extramitochondrial Fe-S proteins. Part of an electron transfer chain functioning in an early step of cytosolic Fe-S biogenesis, facilitating the de novo assembly of a [4Fe-4S] cluster on the scaffold complex CFD1-NBP35. Electrons are transferred to DRE2 from NADPH via the FAD- and FMN-containing protein TAH18. TAH18-DRE2 are also required for the assembly of the diferric tyrosyl radical cofactor of ribonucleotide reductase (RNR), probably by providing electrons for reduction during radical cofactor maturation in the catalytic small subunit RNR2. The protein is Fe-S cluster assembly protein dre2 of Sclerotinia sclerotiorum (strain ATCC 18683 / 1980 / Ss-1) (White mold).